The sequence spans 201 residues: Recombination protein RecR (201 aa).

The segment at 57-74 (CRICGNITENSVNPCAIC) adopts a C4-type zinc-finger fold. The 97-residue stretch at 82–178 (STVFVVENSR…KVTRLAHGLA (97 aa)) folds into the Toprim domain.

It belongs to the RecR family.

Its function is as follows. May play a role in DNA repair. It seems to be involved in an RecBC-independent recombinational process of DNA repair. It may act with RecF and RecO. The chain is Recombination protein RecR from Leuconostoc citreum (strain KM20).